The primary structure comprises 478 residues: Probable L-ascorbate peroxidase 8, chloroplastic (478 aa).

Low complexity predominate over residues 1–13; the sequence is MAERIAASLLPAA. 2 disordered regions span residues 1-31 and 44-66; these read MAER…VSAA and GGLR…RSGR. The transit peptide at 1 to 76 directs the protein to the chloroplast; it reads MAERIAASLL…AGAGARAVVR (76 aa). Pro residues predominate over residues 14–26; it reads SPSPAPSPPPPRP. The active-site Proton acceptor is the His117. The disordered stretch occupies residues 245 to 276; that stretch reads AHTLGRSRPDRSGWGKPETKYTKDGPGEPGGQ. Heme b is bound at residue His246. Thr247 is a K(+) binding site. Residues 251 to 270 show a composition bias toward basic and acidic residues; it reads SRPDRSGWGKPETKYTKDGP. K(+) contacts are provided by Thr279 and Asp286. Positions 346-417 are disordered; that stretch reads AKFDPPEGFS…DNNGAAPQPE (72 aa). A compositionally biased stretch (pro residues) spans 369–381; that stretch reads PAPAPAAAPPPPP. The segment covering 394–406 has biased composition (low complexity); sequence PVTVGAAVASSPA. The helical transmembrane segment at 458 to 478 threads the bilayer; sequence YFLNIMLLIGGLAFLTSLLGS.

This sequence belongs to the peroxidase family. Ascorbate peroxidase subfamily. In terms of assembly, interacts with SWEET11/OS8N3. Heme b serves as cofactor. Expressed in roots, leaves, stems and flowers. Expressed in leaves, shoots and panicles. Expressed at low levels in roots.

The protein localises to the plastid. The protein resides in the chloroplast thylakoid membrane. It carries out the reaction L-ascorbate + H2O2 = L-dehydroascorbate + 2 H2O. In terms of biological role, involved in defense response and tolerance to the bacterial pathogen Xanthomonas oryzae pv. oryzae (Xoo). Plays an important role in hydrogen peroxide removal during infection by Xoo. Involved in response to abiotic stress. Plays a role in hydrogen peroxide removal durings salt stress. The sequence is that of Probable L-ascorbate peroxidase 8, chloroplastic from Oryza sativa subsp. japonica (Rice).